Consider the following 406-residue polypeptide: LIM/homeobox protein Lhx1 (406 aa).

2 consecutive LIM zinc-binding domains span residues 4-54 (CAGC…CKND) and 63-117 (CAGC…CKED). Over residues 125 to 136 (AKENSLHSATTG) the composition is skewed to polar residues. 2 disordered regions span residues 125-187 (AKEN…RTTI) and 296-372 (FPQG…SAEV). The segment covering 137–148 (SDPSLSPDSQDP) has biased composition (low complexity). The segment covering 151–167 (DDAKDSESANVSDKETG) has biased composition (basic and acidic residues). A DNA-binding region (homeobox) is located at residues 180–239 (RRGPRTTIKAKQLETLKAAFAATPKPTRHIREQLAQETGLNMRVIQVWFQNRRSKERRMK).

It localises to the nucleus. In terms of biological role, transcriptional factor that defines subclasses of motoneurons that segregate into columns in the spinal cord and select distinct axon pathways. Acts in conjunction with ISL-2. In Gallus gallus (Chicken), this protein is LIM/homeobox protein Lhx1 (LHX1).